Reading from the N-terminus, the 315-residue chain is Tryptophan prenyltransferase ComQ (315 aa).

Positions 95 and 99 each coordinate Mg(2+).

The protein belongs to the FPP/GGPP synthase family. Mg(2+) serves as cofactor.

Its subcellular location is the cell membrane. The catalysed reaction is L-tryptophyl-[protein] + (2E,6E)-farnesyl diphosphate = (2S,3R)-3-farnesyl-2,3-dihydro-2,N(alpha)-cyclo-L-tryptophyl-[protein] + diphosphate. Its function is as follows. Part of a major quorum-sensing system that regulates the development of genetic competence. Involved in the maturation of the competence pheromone ComX. Acts by catalyzing the transfer of a farnesyl group on the ComX pheromone. In vitro, can also catalyze the farnesylation of single tryptophan and tryptophan derivatives. The chain is Tryptophan prenyltransferase ComQ from Bacillus subtilis subsp. natto (strain BEST195).